The sequence spans 417 residues: MTKTITVAHIQYDFKAVLEENDENDDEFYINVDKNLNEIKEHKIVVLGNSRGVDAGKGNTFEKVGSHLYKARLDGHDFLFNTIIRDGSKMLKRADYTAVDTAKLQMRRFILGTTEGDIKVLDSNFNLQREIDQAHVSEITKLKFFPSGEALISSSQDMQLKIWSVKDGSNPRTLIGHRATVTDIAIIDRGRNVLSASLDGTIRLWECGTGTTIHTFNRKENPHDGVNSIALFVGTDRQLHEISTSKKNNLEFGTYGKYVIAGHVSGVITVHNVFSKEQTIQLPSKFTCSCNSLTVDGNNANYIYAGYENGMLAQWDLRSPECPVGEFLINEGTPINNVYFAAGALFVSSGFDTSIKLDIISDPESERPAIEFETPTFLVSNDDEVSQFCYVSDDESNGEVLEVGKNNFCALYNLSNP.

WD repeat units lie at residues 134-173 (AHVS…NPRT), 176-215 (GHRA…TIHT), 242-281 (ISTS…QTIQ), 285-325 (KFTC…CPVG), 330-371 (NEGT…PAIE), and 380-416 (SNDD…NLSN).

Belongs to the WD repeat PAAF1/RPN14 family. In terms of assembly, associates with the 19S proteasome regulatory particle (RP). Interacts directly with RPT5 and RPT6.

The protein resides in the cytoplasm. The protein localises to the nucleus. Its function is as follows. Acts as a regulatory subunit of the 26 proteasome which is involved in the ATP-dependent degradation of ubiquitinated proteins. Is not a genuine component of the 26S proteasome, but an auxiliary factor that interacts with the proteasomal ATPase of 19S regulatory particle (RP). Acts as a chaperone which regulates the highly structured assembly of the 19S regulatory particle. Involved in the substrate specificity of the 26S proteasome and is especially involved in the degradation of ubiquitinated GCN4. May contribute to the stability of the 26S proteasome in some stress conditions. The sequence is that of 26S proteasome regulatory subunit RPN14 (RPN14) from Saccharomyces cerevisiae (strain ATCC 204508 / S288c) (Baker's yeast).